The primary structure comprises 556 residues: MPKFDVSKSDLERLVGRSFSLEEWEDLVLYAKCELDDVWEENGKVYFKLDSKDTNRPDLWSAEGVARQIRWALGLQSGLPEYEVKESDVVVYVDEKLKNVRPYGVYAIVEGLNLDEDSLSQMIQLQEKVALTFGRRRREVAIGIFDFEKVKPPIYYRAAEKTEKFVPLGFEEELTLEEILEKHEKGIEYGHLIKDKPHYPLLVDSEGNVLSMPPIINSELTGRVTTETKKVFIDVTGWDLKKVMLALNVMVTALAERGGKIRSVKVIYKDFEIVTPDLTPKRFEVELNYIRKLSGLDLKDEEIKELLERMMYSVELEDGKAKLLYPAFRDDIMHARDVLEDVLIAYGYNNIEPEEPKLAVQGRGDPFKDFEDAIRDLMVGFGLQEIMTFNLTNKEVQFKKMNIPEEEIVEIANPVSQRWSALRKWLLPSLMEFLSNNTHEEYPQRIFEVGLATLIDESRETKTISEPKLAVALAGSEYTFTNAKEILDSLMRHLGVEYEIEETEHGSFISGRVGKVLVNGKEVGIIGEIHPQVLENWNIEVPVVAFEIFLRPLYQP.

Positions 278 to 353 (LTPKRFEVEL…IAYGYNNIEP (76 aa)) constitute a B5 domain. Mg(2+)-binding residues include D331, D337, E340, and D341.

Belongs to the phenylalanyl-tRNA synthetase beta subunit family. Type 2 subfamily. In terms of assembly, tetramer of two alpha and two beta subunits. It depends on Mg(2+) as a cofactor.

The protein localises to the cytoplasm. The catalysed reaction is tRNA(Phe) + L-phenylalanine + ATP = L-phenylalanyl-tRNA(Phe) + AMP + diphosphate + H(+). The protein is Phenylalanine--tRNA ligase beta subunit of Pyrococcus abyssi (strain GE5 / Orsay).